The following is a 317-amino-acid chain: Ribosomal RNA large subunit methyltransferase F (317 aa).

This sequence belongs to the methyltransferase superfamily. METTL16/RlmF family.

Its subcellular location is the cytoplasm. The enzyme catalyses adenosine(1618) in 23S rRNA + S-adenosyl-L-methionine = N(6)-methyladenosine(1618) in 23S rRNA + S-adenosyl-L-homocysteine + H(+). Its function is as follows. Specifically methylates the adenine in position 1618 of 23S rRNA. In Pseudomonas putida (strain ATCC 700007 / DSM 6899 / JCM 31910 / BCRC 17059 / LMG 24140 / F1), this protein is Ribosomal RNA large subunit methyltransferase F.